Reading from the N-terminus, the 183-residue chain is Putative manganese efflux pump MntP (183 aa).

6 helical membrane-spanning segments follow: residues 8-28 (IIAL…VALG), 40-60 (FYIG…GMAV), 72-92 (ATYA…IASF), 108-128 (LFFA…LGIF), 133-153 (MVTI…GLFV), and 163-183 (SYSE…LLFL).

It belongs to the MntP (TC 9.B.29) family.

The protein localises to the cell membrane. In terms of biological role, probably functions as a manganese efflux pump. This chain is Putative manganese efflux pump MntP, found in Geobacillus kaustophilus (strain HTA426).